A 73-amino-acid chain; its full sequence is Large ribosomal subunit protein bL31 (73 aa).

This sequence belongs to the bacterial ribosomal protein bL31 family. Type A subfamily. Part of the 50S ribosomal subunit.

In terms of biological role, binds the 23S rRNA. This is Large ribosomal subunit protein bL31 from Cereibacter sphaeroides (strain ATCC 17025 / ATH 2.4.3) (Rhodobacter sphaeroides).